A 313-amino-acid chain; its full sequence is Protease HtpX homolog (313 aa).

Helical transmembrane passes span 7 to 24 (AMLL…GYLI) and 29 to 46 (GMMI…FSYW). His-130 is a binding site for Zn(2+). The active site involves Glu-131. His-134 serves as a coordination point for Zn(2+). The next 2 helical transmembrane spans lie at 145-165 (ITAT…FFGG) and 172-192 (PFGF…AMVV). Glu-201 provides a ligand contact to Zn(2+). Residues 282–313 (GNAPPASLREDEPGADGPWGRSASRARKGPWS) are disordered.

The protein belongs to the peptidase M48B family. The cofactor is Zn(2+).

Its subcellular location is the cell inner membrane. The polypeptide is Protease HtpX homolog (Chelativorans sp. (strain BNC1)).